We begin with the raw amino-acid sequence, 1184 residues long: DNA-directed RNA polymerase subunit beta (1184 aa).

The tract at residues 1160–1184 (DDDFTNQNDAFNIVQPENAAAEKTE) is disordered.

The protein belongs to the RNA polymerase beta chain family. In terms of assembly, the RNAP catalytic core consists of 2 alpha, 1 beta, 1 beta' and 1 omega subunit. When a sigma factor is associated with the core the holoenzyme is formed, which can initiate transcription.

It carries out the reaction RNA(n) + a ribonucleoside 5'-triphosphate = RNA(n+1) + diphosphate. Its function is as follows. DNA-dependent RNA polymerase catalyzes the transcription of DNA into RNA using the four ribonucleoside triphosphates as substrates. The chain is DNA-directed RNA polymerase subunit beta from Listeria welshimeri serovar 6b (strain ATCC 35897 / DSM 20650 / CCUG 15529 / CIP 8149 / NCTC 11857 / SLCC 5334 / V8).